Reading from the N-terminus, the 312-residue chain is GTP cyclohydrolase MptA (312 aa).

The protein belongs to the GTP cyclohydrolase IV family. In terms of assembly, homodimer. Fe(2+) is required as a cofactor.

The catalysed reaction is GTP + H2O = 7,8-dihydroneopterin 2',3'-cyclic phosphate + formate + diphosphate + H(+). The protein operates within cofactor biosynthesis; 5,6,7,8-tetrahydromethanopterin biosynthesis. In terms of biological role, converts GTP to 7,8-dihydro-D-neopterin 2',3'-cyclic phosphate, the first intermediate in the biosynthesis of coenzyme methanopterin. In Methanococcus vannielii (strain ATCC 35089 / DSM 1224 / JCM 13029 / OCM 148 / SB), this protein is GTP cyclohydrolase MptA.